The chain runs to 417 residues: Serine hydroxymethyltransferase 1 (417 aa).

(6S)-5,6,7,8-tetrahydrofolate is bound by residues Leu121 and 125-127; that span reads GHL. Residue Lys229 is modified to N6-(pyridoxal phosphate)lysine. 354 to 356 is a binding site for (6S)-5,6,7,8-tetrahydrofolate; the sequence is SPF.

The protein belongs to the SHMT family. Homodimer. The cofactor is pyridoxal 5'-phosphate.

It localises to the cytoplasm. It carries out the reaction (6R)-5,10-methylene-5,6,7,8-tetrahydrofolate + glycine + H2O = (6S)-5,6,7,8-tetrahydrofolate + L-serine. Its pathway is one-carbon metabolism; tetrahydrofolate interconversion. The protein operates within amino-acid biosynthesis; glycine biosynthesis; glycine from L-serine: step 1/1. Its function is as follows. Catalyzes the reversible interconversion of serine and glycine with tetrahydrofolate (THF) serving as the one-carbon carrier. This reaction serves as the major source of one-carbon groups required for the biosynthesis of purines, thymidylate, methionine, and other important biomolecules. Also exhibits THF-independent aldolase activity toward beta-hydroxyamino acids, producing glycine and aldehydes, via a retro-aldol mechanism. The polypeptide is Serine hydroxymethyltransferase 1 (Pseudomonas savastanoi pv. phaseolicola (strain 1448A / Race 6) (Pseudomonas syringae pv. phaseolicola (strain 1448A / Race 6))).